The primary structure comprises 225 residues: UPF0758 protein Sfri_3828 (225 aa).

An MPN domain is found at 102–224; that stretch reads ILTNPDLTRD…IVSFAERGWI (123 aa). Residues H173, H175, and D186 each contribute to the Zn(2+) site. The short motif at 173 to 186 is the JAMM motif element; sequence HNHPSGIAEPSQAD.

Belongs to the UPF0758 family.

The sequence is that of UPF0758 protein Sfri_3828 from Shewanella frigidimarina (strain NCIMB 400).